The sequence spans 452 residues: Exodeoxyribonuclease 7 large subunit (452 aa).

It belongs to the XseA family. In terms of assembly, heterooligomer composed of large and small subunits.

The protein localises to the cytoplasm. It carries out the reaction Exonucleolytic cleavage in either 5'- to 3'- or 3'- to 5'-direction to yield nucleoside 5'-phosphates.. Its function is as follows. Bidirectionally degrades single-stranded DNA into large acid-insoluble oligonucleotides, which are then degraded further into small acid-soluble oligonucleotides. The polypeptide is Exodeoxyribonuclease 7 large subunit (Bacillus mycoides (strain KBAB4) (Bacillus weihenstephanensis)).